We begin with the raw amino-acid sequence, 598 residues long: Nicotinamide riboside transporter 1 (598 aa).

A run of 11 helical transmembrane segments spans residues 48–68, 71–91, 112–132, 174–194, 197–217, 241–261, 273–293, 372–392, 395–415, 447–467, and 484–504; these read LAYW…SAAL, GLSY…TIIF, FVFG…MSIV, LVGF…KPYH, YLLI…VIYL, AWAW…GSTN, LAIW…VPIF, GALF…YNSS, FLTV…VMIC, AIVA…WEVN, and SFFS…FFPF. Residues Ser-560 and Ser-572 each carry the phosphoserine modification.

Belongs to the purine-cytosine permease (2.A.39) family.

The protein localises to the cell membrane. Functionally, high-affinity pH-dependent nicotinamide riboside transporter which also transports thiamine with low affinity. Involved in 5-fluorocytosine sensitivity. This chain is Nicotinamide riboside transporter 1 (NRT1), found in Saccharomyces cerevisiae (strain ATCC 204508 / S288c) (Baker's yeast).